Consider the following 101-residue polypeptide: Small ribosomal subunit protein uS14 (101 aa).

This sequence belongs to the universal ribosomal protein uS14 family. As to quaternary structure, part of the 30S ribosomal subunit. Contacts proteins S3 and S10.

Its function is as follows. Binds 16S rRNA, required for the assembly of 30S particles and may also be responsible for determining the conformation of the 16S rRNA at the A site. The protein is Small ribosomal subunit protein uS14 of Francisella tularensis subsp. holarctica (strain FTNF002-00 / FTA).